The chain runs to 300 residues: Protoheme IX farnesyltransferase 1 (300 aa).

9 helical membrane passes run 28-48, 54-74, 100-120, 122-142, 149-169, 176-196, 222-242, 243-263, and 280-300; these read VVAL…PTIL, VAGL…NHLI, ALLF…VFTN, LTAW…TAYL, NIVI…TAVT, ALLL…ALAI, CILL…LVGM, SGPL…YKAW, and FSIY…YLWA.

Belongs to the UbiA prenyltransferase family. Protoheme IX farnesyltransferase subfamily.

The protein localises to the cell inner membrane. It carries out the reaction heme b + (2E,6E)-farnesyl diphosphate + H2O = Fe(II)-heme o + diphosphate. The protein operates within porphyrin-containing compound metabolism; heme O biosynthesis; heme O from protoheme: step 1/1. Converts heme B (protoheme IX) to heme O by substitution of the vinyl group on carbon 2 of heme B porphyrin ring with a hydroxyethyl farnesyl side group. This is Protoheme IX farnesyltransferase 1 from Shewanella sp. (strain ANA-3).